The chain runs to 193 residues: Small ribosomal subunit protein eS1 (193 aa).

Belongs to the eukaryotic ribosomal protein eS1 family.

In Sulfurisphaera tokodaii (strain DSM 16993 / JCM 10545 / NBRC 100140 / 7) (Sulfolobus tokodaii), this protein is Small ribosomal subunit protein eS1.